A 404-amino-acid polypeptide reads, in one-letter code: Formate-dependent phosphoribosylglycinamide formyltransferase (404 aa).

N(1)-(5-phospho-beta-D-ribosyl)glycinamide is bound by residues 25–26 (EL) and Glu-85. ATP contacts are provided by residues Arg-118, Lys-159, 164 to 169 (SSGKGQ), 199 to 202 (EGFI), and Glu-207. Residues 123–318 (RLAAEELGLP…EFELHARAIL (196 aa)) form the ATP-grasp domain. Residues Glu-277 and Glu-289 each coordinate Mg(2+). N(1)-(5-phospho-beta-D-ribosyl)glycinamide contacts are provided by residues Asp-296, Lys-365, and 372 to 373 (RR).

Belongs to the PurK/PurT family. Homodimer.

The catalysed reaction is N(1)-(5-phospho-beta-D-ribosyl)glycinamide + formate + ATP = N(2)-formyl-N(1)-(5-phospho-beta-D-ribosyl)glycinamide + ADP + phosphate + H(+). Its pathway is purine metabolism; IMP biosynthesis via de novo pathway; N(2)-formyl-N(1)-(5-phospho-D-ribosyl)glycinamide from N(1)-(5-phospho-D-ribosyl)glycinamide (formate route): step 1/1. Involved in the de novo purine biosynthesis. Catalyzes the transfer of formate to 5-phospho-ribosyl-glycinamide (GAR), producing 5-phospho-ribosyl-N-formylglycinamide (FGAR). Formate is provided by PurU via hydrolysis of 10-formyl-tetrahydrofolate. The polypeptide is Formate-dependent phosphoribosylglycinamide formyltransferase (Burkholderia pseudomallei (strain 668)).